The sequence spans 657 residues: Acetyl-coenzyme A synthetase (657 aa).

Residues 192–195 (RRGK) and T311 each bind CoA. ATP is bound by residues 387–389 (GEP), 411–416 (DTWWQT), D504, R519, and R530. The Mg(2+) site is built by H543 and V546. R592 contacts CoA. K617 is subject to N6-acetyllysine.

Belongs to the ATP-dependent AMP-binding enzyme family. The cofactor is Mg(2+). Acetylated. Deacetylation by the SIR2-homolog deacetylase activates the enzyme.

The catalysed reaction is acetate + ATP + CoA = acetyl-CoA + AMP + diphosphate. Its function is as follows. Catalyzes the conversion of acetate into acetyl-CoA (AcCoA), an essential intermediate at the junction of anabolic and catabolic pathways. AcsA undergoes a two-step reaction. In the first half reaction, AcsA combines acetate with ATP to form acetyl-adenylate (AcAMP) intermediate. In the second half reaction, it can then transfer the acetyl group from AcAMP to the sulfhydryl group of CoA, forming the product AcCoA. This is Acetyl-coenzyme A synthetase from Campylobacter jejuni subsp. jejuni serotype O:2 (strain ATCC 700819 / NCTC 11168).